The primary structure comprises 814 residues: Dimethyl sulfoxide reductase DmsA (814 aa).

Residues 1-45 (MKTKIPDAVLAAEVSRRGLVKTTAIGGLAMASSALTLPFSRIAHA) constitute a signal peptide (tat-type signal). The 4Fe-4S Mo/W bis-MGD-type domain occupies 56-118 (EKVIWSACTV…SMRRRVYNPD (63 aa)). Residues Cys63, Cys67, Cys71, and Cys104 each coordinate [4Fe-4S] cluster. Residues 172–176 (LGGTM), Ser205, 244–245 (ET), 270–271 (ID), 291–293 (GTD), 386–387 (WG), Arg390, Asn488, 512–513 (ID), His701, 707–709 (HST), Asn788, and 804–805 (SH) each bind Mo-bis(molybdopterin guanine dinucleotide).

The protein belongs to the prokaryotic molybdopterin-containing oxidoreductase family. As to quaternary structure, heterotrimeric enzyme composed of a catalytic heterodimer (DmsAB) and a membrane anchor protein (DmsC). It depends on [4Fe-4S] cluster as a cofactor. The cofactor is Mo-bis(molybdopterin guanine dinucleotide). Post-translationally, exported by the Tat system. The position of the signal peptide cleavage has been experimentally proven. Can also be exported by the Sec system.

The protein resides in the cell membrane. The catalysed reaction is dimethyl sulfide + a menaquinone + H2O = dimethyl sulfoxide + a menaquinol. With respect to regulation, inhibited by dithionite, sodium hydrogensulfite and tungstate. Catalyzes the reduction of dimethyl sulfoxide (DMSO) to dimethyl sulfide (DMS). DMSO reductase serves as the terminal reductase under anaerobic conditions, with DMSO being the terminal electron acceptor. Terminal reductase during anaerobic growth on various sulfoxides and N-oxide compounds. Allows E.coli to grow anaerobically on DMSO as respiratory oxidant. This is Dimethyl sulfoxide reductase DmsA (dmsA) from Escherichia coli (strain K12).